Here is a 271-residue protein sequence, read N- to C-terminus: Type III pantothenate kinase (271 aa).

Residue 6-13 (DVRNTNIV) participates in ATP binding. 109–112 (GADR) lines the substrate pocket. The active-site Proton acceptor is D111. D131 provides a ligand contact to K(+). Residue T134 coordinates ATP. T186 is a binding site for substrate.

Belongs to the type III pantothenate kinase family. In terms of assembly, homodimer. It depends on NH4(+) as a cofactor. The cofactor is K(+).

The protein localises to the cytoplasm. It carries out the reaction (R)-pantothenate + ATP = (R)-4'-phosphopantothenate + ADP + H(+). The protein operates within cofactor biosynthesis; coenzyme A biosynthesis; CoA from (R)-pantothenate: step 1/5. In terms of biological role, catalyzes the phosphorylation of pantothenate (Pan), the first step in CoA biosynthesis. The polypeptide is Type III pantothenate kinase (Rhodococcus opacus (strain B4)).